The sequence spans 380 residues: Deoxyguanosinetriphosphate triphosphohydrolase-like protein (380 aa).

The tract at residues 1-28 (MYAPYATMPDRSRGRAVPEEESSFRSPF) is disordered. Residues 62-198 (RLTHSIEVGQ…AALADDIAYN (137 aa)) form the HD domain.

It belongs to the dGTPase family. Type 2 subfamily.

In Ruegeria sp. (strain TM1040) (Silicibacter sp.), this protein is Deoxyguanosinetriphosphate triphosphohydrolase-like protein.